Consider the following 498-residue polypeptide: ATP synthase subunit beta, chloroplastic (498 aa).

172 to 179 (GGAGVGKT) is an ATP binding site.

The protein belongs to the ATPase alpha/beta chains family. In terms of assembly, F-type ATPases have 2 components, CF(1) - the catalytic core - and CF(0) - the membrane proton channel. CF(1) has five subunits: alpha(3), beta(3), gamma(1), delta(1), epsilon(1). CF(0) has four main subunits: a(1), b(1), b'(1) and c(9-12).

It localises to the plastid. Its subcellular location is the chloroplast thylakoid membrane. The enzyme catalyses ATP + H2O + 4 H(+)(in) = ADP + phosphate + 5 H(+)(out). Functionally, produces ATP from ADP in the presence of a proton gradient across the membrane. The catalytic sites are hosted primarily by the beta subunits. This chain is ATP synthase subunit beta, chloroplastic, found in Nymphaea alba (White water-lily).